We begin with the raw amino-acid sequence, 104 residues long: Transcription factor S (104 aa).

8 residues coordinate Zn(2+): cysteine 4, cysteine 7, cysteine 20, cysteine 22, cysteine 65, cysteine 68, cysteine 93, and cysteine 96. Residues cysteine 4–cysteine 22 form a C4-type zinc finger. The segment at threonine 61 to arginine 101 adopts a TFIIS-type zinc-finger fold.

Belongs to the archaeal RpoM/eukaryotic RPA12/RPB9/RPC11 RNA polymerase family.

In terms of biological role, induces RNA cleavage activity in the RNA polymerase. In its presence, the cleavage activity of the RNA polymerase truncates the RNA back to position +15 in a stepwise manner by releasing mainly dinucleotides from the 3'-end of the nascent RNA. The truncated RNAs are able to continue elongation. Involved in transcriptional proofreading and fidelity. Misincorporation of nucleotides during elongation of transcription leads to arrested elongation complexes which are rescued by TFS-promoted removal of a dinucleotide from the 3'-end. TFS is able to induce a cleavage resynthesis cycle in stalled elongation complexes (resulting from the next missing nucleotide or a reduced incorporation rate of a wrong nucleotide) preventing misincorporation and enabling proofreading in a post-incorporation manner. Pausing of elongation complexes is the main determinant of TFS-induced RNA cleavage. The polypeptide is Transcription factor S (Methanothermobacter thermautotrophicus (strain ATCC 29096 / DSM 1053 / JCM 10044 / NBRC 100330 / Delta H) (Methanobacterium thermoautotrophicum)).